The following is a 419-amino-acid chain: Light-dependent chlorophyll f synthase (419 aa).

5 consecutive transmembrane segments (helical) span residues 73–90, 162–177, 186–200, 241–262, and 323–337; these read YIGW…TAAI, HFII…EWEL, WISL…ASVS, LHQM…HGSL, and CLAA…SAAI. Residue His-162 participates in a chlorophyll binding. His-242 contacts a chlorophyll.

The protein belongs to the reaction center PufL/M/PsbA/D family. Homodimer.

It is found in the cellular thylakoid membrane. In terms of biological role, synthesizes chlorophyll f or chlorophyllide f (Chl f, 2-formyl chlorophyll a), probably by oxidation of chlorophyll a or chlorophyllide a and reduction of plastoquinone. The reaction is probably light-dependent. Chl f absorbs far red light (FRL, 707 nm in 100% methanol), and is synthesized when cells are grown in FRL, where it provides the advantage of extending the spectral range of harvested light in terrestrial cyanobacteria. Chl f synthesis is probably light-dependent. The chain is Light-dependent chlorophyll f synthase from Synechococcus sp. (strain ATCC 29403 / PCC 7335).